A 717-amino-acid polypeptide reads, in one-letter code: Putative amino acid transporter AAT1 (717 aa).

Residues 1-10 (MREGAFDASR) are compositionally biased toward basic and acidic residues. Positions 1–88 (MREGAFDASR…DRAQTDSRQE (88 aa)) are disordered. Over residues 16–25 (QRPSSLSTAQ) the composition is skewed to polar residues. Positions 26–53 (PPSDSRPPSSSSPPSSSSSSSSASSSSP) are enriched in low complexity. Basic and acidic residues predominate over residues 74–88 (SAEKMDRAQTDSRQE). A run of 8 helical transmembrane segments spans residues 124–143 (VLTL…PYAM), 149–170 (LIGL…YILM), 196–216 (AVDA…LVFL), 236–253 (HRAA…PLSV), 265–283 (FFPV…YRSL), 303–320 (FKSF…INVC), 341–358 (AALL…LGYL), and 378–402 (LMHV…IPTV). The interval 462–602 (GDAEYGGAEA…REEREEREGQ (141 aa)) is disordered. The span at 463-477 (DAEYGGAEAGEATRG) shows a compositional bias: low complexity. Residues 497–519 (ARNRDRSRLHADSERSAGDREGS) show a composition bias toward basic and acidic residues. Positions 547-558 (GSSSASSRSVDS) are enriched in low complexity. Residues 584–602 (SGDREAREEREEREEREGQ) are compositionally biased toward basic and acidic residues. Transmembrane regions (helical) follow at residues 622 to 638 (VCVA…ALVL), 644 to 669 (VVGL…YAGI), and 681 to 702 (LLMV…IIIL).

This sequence belongs to the amino acid/polyamine transporter 2 family.

The protein localises to the vacuole membrane. Putative amino acid transporter. Probably transports arginine. Involved in maintaining the osmotic homeostasis of the digestive vacuole. Required for extracellular parasite survival and bradyzoite differentiation. This is Putative amino acid transporter AAT1 from Toxoplasma gondii (strain ATCC 50611 / Me49).